Reading from the N-terminus, the 213-residue chain is ATP-dependent dethiobiotin synthetase BioD (213 aa).

13-18 provides a ligand contact to ATP; the sequence is GIGKTV. Mg(2+) is bound at residue threonine 17. Lysine 33 is a catalytic residue. Glutamate 100 contributes to the Mg(2+) binding site. ATP-binding positions include 100–103 and 184–186; these read EGAG and PRL.

Belongs to the dethiobiotin synthetase family. In terms of assembly, homodimer. The cofactor is Mg(2+).

It localises to the cytoplasm. The enzyme catalyses (7R,8S)-7,8-diammoniononanoate + CO2 + ATP = (4R,5S)-dethiobiotin + ADP + phosphate + 3 H(+). It participates in cofactor biosynthesis; biotin biosynthesis; biotin from 7,8-diaminononanoate: step 1/2. In terms of biological role, catalyzes a mechanistically unusual reaction, the ATP-dependent insertion of CO2 between the N7 and N8 nitrogen atoms of 7,8-diaminopelargonic acid (DAPA, also called 7,8-diammoniononanoate) to form a ureido ring. In Rhodopseudomonas palustris (strain HaA2), this protein is ATP-dependent dethiobiotin synthetase BioD.